Here is a 104-residue protein sequence, read N- to C-terminus: L-rhamnose mutarotase (104 aa).

Y18 provides a ligand contact to substrate. Residue H22 is the Proton donor of the active site. Residues Y41 and 76–77 contribute to the substrate site; that span reads WW.

It belongs to the rhamnose mutarotase family. Homodimer.

The protein resides in the cytoplasm. It carries out the reaction alpha-L-rhamnose = beta-L-rhamnose. Its pathway is carbohydrate metabolism; L-rhamnose metabolism. Involved in the anomeric conversion of L-rhamnose. The chain is L-rhamnose mutarotase from Escherichia coli O127:H6 (strain E2348/69 / EPEC).